The chain runs to 221 residues: uncharacterized protein (221 aa).

This is an uncharacterized protein from Archaeoglobus fulgidus (strain ATCC 49558 / DSM 4304 / JCM 9628 / NBRC 100126 / VC-16).